The primary structure comprises 449 residues: 23S rRNA (uracil(1939)-C(5))-methyltransferase RlmD (449 aa).

The TRAM domain maps to 15–73 (KAIPAKNLTVTVTSLDPFGQGVARHEGKTVFVTGVLPGEQAEVQLTEDKRQFSHAKLKR). [4Fe-4S] cluster is bound by residues cysteine 86, cysteine 92, cysteine 95, and cysteine 173. Positions 276, 305, 310, 326, 353, and 374 each coordinate S-adenosyl-L-methionine. Cysteine 400 (nucleophile) is an active-site residue.

This sequence belongs to the class I-like SAM-binding methyltransferase superfamily. RNA M5U methyltransferase family. RlmD subfamily.

The catalysed reaction is uridine(1939) in 23S rRNA + S-adenosyl-L-methionine = 5-methyluridine(1939) in 23S rRNA + S-adenosyl-L-homocysteine + H(+). Catalyzes the formation of 5-methyl-uridine at position 1939 (m5U1939) in 23S rRNA. This chain is 23S rRNA (uracil(1939)-C(5))-methyltransferase RlmD, found in Pectobacterium carotovorum subsp. carotovorum (strain PC1).